The primary structure comprises 153 residues: E3 ubiquitin-protein ligase AIRP1 (153 aa).

Residues 104 to 145 (CPICLEEYEIDNPKLLTKCGHDFHLACILAWMERSEACPVCD) form an RING-type; atypical zinc finger.

The protein resides in the cytoplasm. Its subcellular location is the cytosol. The catalysed reaction is S-ubiquitinyl-[E2 ubiquitin-conjugating enzyme]-L-cysteine + [acceptor protein]-L-lysine = [E2 ubiquitin-conjugating enzyme]-L-cysteine + N(6)-ubiquitinyl-[acceptor protein]-L-lysine.. In terms of biological role, possesses E3 ubiquitin-protein ligase activity in vitro when associated with the E2 enzyme UBC8 in vitro. Plays combinatory roles with AIRP2 in the positive regulation of the abscisic acid-mediated drought stress response. In Arabidopsis thaliana (Mouse-ear cress), this protein is E3 ubiquitin-protein ligase AIRP1.